We begin with the raw amino-acid sequence, 31 residues long: Cyclotide psybry C (31 aa).

The segment at residues 1–31 (GFNPCGETCQIDQTCHAPGCTCSIANICVRN) is a cross-link (cyclopeptide (Gly-Asn)). Disulfide bonds link Cys-5–Cys-20, Cys-9–Cys-22, and Cys-15–Cys-28.

This is a cyclic peptide.

Functionally, probably participates in a plant defense mechanism. The chain is Cyclotide psybry C from Psychotria brachyceras.